Consider the following 361-residue polypeptide: MNLIYNFSAGPAMIPKDVLYQAKKELQNWNQIGCSIMEISHRSKEFIQVALEAEQDLRDLLNISNSYEILFCQGGARGQFAAVPMNLLGNFKETDYINSGYWSNCALIEAKKYCIPKNISVRQKKNGKSFLLKPSQWNISDNSAYIHYCPNETIDGMSIYEEPNFKNKIIVGDFSSFILSRRINIENYGLIYAGAQKNIGPSGITIILIRKDLIGYASKISPSIFNYYIISKYNSMFNTPPTFSWYLSGLVFKWLKKQGGIKKIEQLNQKKSNLLYQIIDNSNFYINDIDKRNRSQMNVVFHLYNSKLDNLFLKEAKNAGLNALKGHNVIGGMRASIYNAMPLEGVQSLAKFMLYFEKKYG.

Residue Arg42 participates in L-glutamate binding. Pyridoxal 5'-phosphate-binding positions include Ala76–Arg77, Trp102, Thr153, Asp173, and Gln196. Position 197 is an N6-(pyridoxal phosphate)lysine (Lys197). Asn238–Thr239 serves as a coordination point for pyridoxal 5'-phosphate.

The protein belongs to the class-V pyridoxal-phosphate-dependent aminotransferase family. SerC subfamily. Homodimer. Pyridoxal 5'-phosphate is required as a cofactor.

Its subcellular location is the cytoplasm. It catalyses the reaction O-phospho-L-serine + 2-oxoglutarate = 3-phosphooxypyruvate + L-glutamate. The catalysed reaction is 4-(phosphooxy)-L-threonine + 2-oxoglutarate = (R)-3-hydroxy-2-oxo-4-phosphooxybutanoate + L-glutamate. The protein operates within amino-acid biosynthesis; L-serine biosynthesis; L-serine from 3-phospho-D-glycerate: step 2/3. It functions in the pathway cofactor biosynthesis; pyridoxine 5'-phosphate biosynthesis; pyridoxine 5'-phosphate from D-erythrose 4-phosphate: step 3/5. Its function is as follows. Catalyzes the reversible conversion of 3-phosphohydroxypyruvate to phosphoserine and of 3-hydroxy-2-oxo-4-phosphonooxybutanoate to phosphohydroxythreonine. The protein is Phosphoserine aminotransferase of Buchnera aphidicola subsp. Schizaphis graminum (strain Sg).